Here is a 406-residue protein sequence, read N- to C-terminus: Cysteine desulfurase (406 aa).

At K226 the chain carries N6-(pyridoxal phosphate)lysine. The active-site Cysteine persulfide intermediate is the C364.

It belongs to the class-V pyridoxal-phosphate-dependent aminotransferase family. Csd subfamily. As to quaternary structure, homodimer. Interacts with SufE and the SufBCD complex composed of SufB, SufC and SufD. The interaction with SufE is required to mediate the direct transfer of the sulfur atom from the S-sulfanylcysteine. The cofactor is pyridoxal 5'-phosphate.

It is found in the cytoplasm. It carries out the reaction (sulfur carrier)-H + L-cysteine = (sulfur carrier)-SH + L-alanine. The catalysed reaction is L-selenocysteine + AH2 = hydrogenselenide + L-alanine + A + H(+). Its pathway is cofactor biosynthesis; iron-sulfur cluster biosynthesis. Its function is as follows. Cysteine desulfurases mobilize the sulfur from L-cysteine to yield L-alanine, an essential step in sulfur metabolism for biosynthesis of a variety of sulfur-containing biomolecules. Component of the suf operon, which is activated and required under specific conditions such as oxidative stress and iron limitation. Acts as a potent selenocysteine lyase in vitro, that mobilizes selenium from L-selenocysteine. Selenocysteine lyase activity is however unsure in vivo. The polypeptide is Cysteine desulfurase (Escherichia coli O6:K15:H31 (strain 536 / UPEC)).